The sequence spans 258 residues: Type III pantothenate kinase (258 aa).

6–13 (DVGNTNIV) is a binding site for ATP. Substrate is bound by residues Tyr100 and 107-110 (GADR). Asp109 serves as the catalytic Proton acceptor. Asp129 lines the K(+) pocket. ATP is bound at residue Thr132. Thr184 contributes to the substrate binding site.

This sequence belongs to the type III pantothenate kinase family. As to quaternary structure, homodimer. NH4(+) is required as a cofactor. K(+) serves as cofactor.

The protein resides in the cytoplasm. The catalysed reaction is (R)-pantothenate + ATP = (R)-4'-phosphopantothenate + ADP + H(+). Its pathway is cofactor biosynthesis; coenzyme A biosynthesis; CoA from (R)-pantothenate: step 1/5. In terms of biological role, catalyzes the phosphorylation of pantothenate (Pan), the first step in CoA biosynthesis. The sequence is that of Type III pantothenate kinase from Clostridium botulinum (strain Loch Maree / Type A3).